A 526-amino-acid chain; its full sequence is Osmo-independent choline transporter BetT1 (526 aa).

Over 1–17 (MWSKRDEQKTYPPIRLN) the chain is Cytoplasmic. Residues 18–38 (PFVFWSSAISISIFGMLFVLF) traverse the membrane as a helical segment. Residues 39 to 56 (PETSQHGLTWIQQQVNQL) lie on the Periplasmic side of the membrane. A helical membrane pass occupies residues 57-77 (FGWYYMLVIILSLGFVAWLAF). Residues 78-93 (SQVGNIPLGKAQDKPE) lie on the Cytoplasmic side of the membrane. A helical membrane pass occupies residues 94 to 114 (FGYLVWTSMLFSAGIGIALLY). The Periplasmic segment spans residues 115–148 (YGVAEPVDHFLRPPEGQGGTVEAAQNAMMYSFLH). The chain crosses the membrane as a helical span at residues 149–169 (WGIHGWVLYALVGVTLGYFAF). The Cytoplasmic portion of the chain corresponds to 170-200 (RRDLPLALRSALYPIFGERIHGLVGHMVDGF). The chain crosses the membrane as a helical span at residues 201–221 (GILATIISLVTNLGIGALVMI). The Periplasmic segment spans residues 222–236 (SGISYLFPDLPNTSS). A helical membrane pass occupies residues 237-257 (TLVVTVIMMMLVATLTTVIGI). The Cytoplasmic segment spans residues 258-272 (EKGLAWLSRINLRLL). A helical transmembrane segment spans residues 273 to 293 (YLLLLFVFLTGPTNHLLNGLV). The Periplasmic portion of the chain corresponds to 294 to 323 (QNTGDYLSHFVQKSFDLYLYDKNATGWLAS). Residues 324 to 344 (WTIFYWAWWIAWAPFVGMFIA) traverse the membrane as a helical segment. At 345–354 (RISKGRTIRE) the chain is on the cytoplasmic side. A helical transmembrane segment spans residues 355–375 (VVLGVCLIPLGFTLAWISIFG). The Periplasmic portion of the chain corresponds to 376 to 417 (NTAIDLILNHGQQIIGSLVIQDPALSLFKLLEYLPFHPYVAG). Residues 418–438 (IVVVICFVLFLTPVGSGTLMI) traverse the membrane as a helical segment. The Cytoplasmic segment spans residues 439–457 (ANLSSQGGSSDSDSPIWLR). The helical transmembrane segment at 458 to 478 (VFWSIAITIVSIGLLLAGSFS) threads the bilayer. Over 479-482 (AMQS) the chain is Periplasmic. Residues 483–503 (AVVLCGLPFSVILLLYMFGLA) traverse the membrane as a helical segment. The Cytoplasmic segment spans residues 504-526 (KALKQETQQPVVESHTTETSGSD).

The protein belongs to the BCCT transporter (TC 2.A.15) family.

The protein localises to the cell inner membrane. In terms of biological role, sodium-independent high-affinity choline uptake system. Uptake is not proton coupled. May play a role in metabolic adaptation to choline-containing environments. The chain is Osmo-independent choline transporter BetT1 from Acinetobacter baylyi (strain ATCC 33305 / BD413 / ADP1).